The sequence spans 521 residues: Cytochrome P450 1A1 (521 aa).

Residue F229 participates in substrate binding. C463 contributes to the heme binding site.

It belongs to the cytochrome P450 family. Heme is required as a cofactor.

It is found in the endoplasmic reticulum membrane. The protein localises to the microsome membrane. It carries out the reaction an organic molecule + reduced [NADPH--hemoprotein reductase] + O2 = an alcohol + oxidized [NADPH--hemoprotein reductase] + H2O + H(+). In terms of biological role, cytochromes P450 are a group of heme-thiolate monooxygenases. They oxidize a variety of structurally unrelated compounds, including steroids, fatty acids, and xenobiotics. In Oryzias latipes (Japanese rice fish), this protein is Cytochrome P450 1A1 (cyp1a1).